A 358-amino-acid chain; its full sequence is Magnesium-protoporphyrin IX monomethyl ester [oxidative] cyclase (358 aa).

Belongs to the AcsF family. It depends on Fe cation as a cofactor.

The catalysed reaction is Mg-protoporphyrin IX 13-monomethyl ester + 3 NADPH + 3 O2 + 2 H(+) = 3,8-divinyl protochlorophyllide a + 3 NADP(+) + 5 H2O. Its pathway is porphyrin-containing compound metabolism; chlorophyll biosynthesis (light-independent). Its function is as follows. Catalyzes the formation of the isocyclic ring in chlorophyll biosynthesis. Mediates the cyclase reaction, which results in the formation of divinylprotochlorophyllide (Pchlide) characteristic of all chlorophylls from magnesium-protoporphyrin IX 13-monomethyl ester (MgPMME). The sequence is that of Magnesium-protoporphyrin IX monomethyl ester [oxidative] cyclase from Synechococcus elongatus (strain ATCC 33912 / PCC 7942 / FACHB-805) (Anacystis nidulans R2).